A 207-amino-acid chain; its full sequence is Granulocyte colony-stimulating factor (207 aa).

A signal peptide spans 1-30; the sequence is MAGPATQSPMKLMALQLLLWHSALWTVQEA. 2 disulfide bridges follow: cysteine 69/cysteine 75 and cysteine 97/cysteine 107. O-linked (GalNAc...) threonine glycosylation is present at threonine 166.

The protein belongs to the IL-6 superfamily. In terms of assembly, monomer. O-glycan consists of Gal-GalNAc disaccharide which can be modified with up to two sialic acid residues (done in recombinantly expressed G-CSF from CHO cells).

It is found in the secreted. Its function is as follows. Granulocyte/macrophage colony-stimulating factors are cytokines that act in hematopoiesis by controlling the production, differentiation, and function of 2 related white cell populations of the blood, the granulocytes and the monocytes-macrophages. This CSF induces granulocytes. The chain is Granulocyte colony-stimulating factor (CSF3) from Homo sapiens (Human).